The sequence spans 130 residues: MISMASWQLLLLLCVATYGEPLAKVAPLVKPGSTGQQSGPQELVNAWEKESRYAESKPGSAGLRARRSSPCPPVEGPAGRQRPLCASRSRLIPAPRGAVLVQREKDLSTYNWNSFGLRYGRRQAARAARG.

Residues 1–19 (MISMASWQLLLLLCVATYG) form the signal peptide. The interval 49–82 (KESRYAESKPGSAGLRARRSSPCPPVEGPAGRQR) is disordered. Cys-71 and Cys-85 form a disulfide bridge. Phosphotyrosine is present on Tyr-110. The segment at 110–119 (YNWNSFGLRY) is essential for receptor binding and receptor activation. Tyr-119 is modified (tyrosine amide).

Belongs to the KISS1 family. In terms of tissue distribution, weak in all tissue types with highest levels in lung and 15- 17-day embryos. Expressed in areas of the hypothalamus implicated in the neuroendocrine regulation of gonadotropin secretion, including the anteroventral periventricular nucleus, the periventricular nucleus, and the arcuate nucleus.

It localises to the secreted. Its function is as follows. Metastasis suppressor protein. May regulate events downstream of cell-matrix adhesion, perhaps involving cytoskeletal reorganization. Generates a C-terminally amidated peptide, metastin which functions as the endogenous ligand of the G-protein coupled receptor GPR54. Activation of the receptor inhibits cell proliferation and cell migration, key characteristics of tumor metastasis. The receptor is also essential for normal gonadotropin-released hormone physiology and for puberty. The hypothalamic KiSS1/GPR54 system is a pivotal factor in central regulation of the gonadotropic axis at puberty and in adulthood. Intracerebroventricular administration induces an increase in serum LH and FSH levels in prepubertal male and female as well as in adult animals. In Mus musculus (Mouse), this protein is Metastasis-suppressor KiSS-1 (Kiss1).